The chain runs to 430 residues: Putative ABC transporter periplasmic-binding protein YcjN (430 aa).

Residues 1–19 (MIKSKIVLLSALVSCALIS) form the signal peptide.

Belongs to the bacterial solute-binding protein 1 family.

Its subcellular location is the periplasm. Probably part of the binding-protein-dependent transport system YcjNOP. This chain is Putative ABC transporter periplasmic-binding protein YcjN (ycjN), found in Escherichia coli (strain K12).